We begin with the raw amino-acid sequence, 88 residues long: Exodeoxyribonuclease 7 small subunit (88 aa).

Belongs to the XseB family. In terms of assembly, heterooligomer composed of large and small subunits.

Its subcellular location is the cytoplasm. It carries out the reaction Exonucleolytic cleavage in either 5'- to 3'- or 3'- to 5'-direction to yield nucleoside 5'-phosphates.. In terms of biological role, bidirectionally degrades single-stranded DNA into large acid-insoluble oligonucleotides, which are then degraded further into small acid-soluble oligonucleotides. This chain is Exodeoxyribonuclease 7 small subunit, found in Tolumonas auensis (strain DSM 9187 / NBRC 110442 / TA 4).